The chain runs to 521 residues: Cytochrome P450 1A1 (521 aa).

F229 provides a ligand contact to substrate. Heme is bound at residue C463.

This sequence belongs to the cytochrome P450 family. It depends on heme as a cofactor.

The protein resides in the endoplasmic reticulum membrane. Its subcellular location is the microsome membrane. The enzyme catalyses an organic molecule + reduced [NADPH--hemoprotein reductase] + O2 = an alcohol + oxidized [NADPH--hemoprotein reductase] + H2O + H(+). Functionally, cytochromes P450 are a group of heme-thiolate monooxygenases. They oxidize a variety of structurally unrelated compounds, including steroids, fatty acids, and xenobiotics. The polypeptide is Cytochrome P450 1A1 (cyp1a1) (Chelon saliens (Leaping mullet)).